A 62-amino-acid polypeptide reads, in one-letter code: UPF0434 protein RHE_CH03977 (62 aa).

The protein belongs to the UPF0434 family.

This is UPF0434 protein RHE_CH03977 from Rhizobium etli (strain ATCC 51251 / DSM 11541 / JCM 21823 / NBRC 15573 / CFN 42).